The sequence spans 117 residues: Appetite-regulating hormone (117 aa).

The first 23 residues, 1-23 (MPSPGTVCSLLLLGMLWLDLAMA), serve as a signal peptide directing secretion. Serine 26 is lipidated: O-decanoyl serine; alternate. The O-hexanoyl serine; alternate moiety is linked to residue serine 26. Residue serine 26 is the site of O-octanoyl serine; alternate attachment. The tract at residues 29 to 67 (SPEHQRAQQRKESKKPPAKLQPRALGGWLRPEDGDQAEG) is disordered. Residues 31-43 (EHQRAQQRKESKK) show a composition bias toward basic and acidic residues. Positions 52-75 (ALGGWLRPEDGDQAEGAEDELEIQ) are cleaved as a propeptide — removed in mature form. Leucine 98 is modified (leucine amide). Residues 99 to 117 (GKFLQDILWEEAKEAPADK) constitute a propeptide, removed in mature form.

This sequence belongs to the motilin family. O-octanoylated by GOAT/MBOAT4. O-octanoylation is essential for ghrelin activity. In terms of processing, amidation of Leu-98 is essential for obestatin activity.

It localises to the secreted. Its function is as follows. Ghrelin is the ligand for growth hormone secretagogue receptor type 1 (GHSR). Induces the release of growth hormone from the pituitary. Has an appetite-stimulating effect, induces adiposity and stimulates gastric acid secretion. Involved in growth regulation. Functionally, obestatin may be the ligand for GPR39. May have an appetite-reducing effect resulting in decreased food intake. May reduce gastric emptying activity and jejunal motility. The protein is Appetite-regulating hormone (GHRL) of Papio hamadryas (Hamadryas baboon).